The following is a 335-amino-acid chain: Glycerol-3-phosphate dehydrogenase [NAD(P)+] (335 aa).

3 residues coordinate NADPH: S12, W13, and K107. Residues K107, G138, and S140 each coordinate sn-glycerol 3-phosphate. Residue A142 participates in NADPH binding. Residues K193, D246, S256, R257, and N258 each coordinate sn-glycerol 3-phosphate. K193 (proton acceptor) is an active-site residue. R257 lines the NADPH pocket. V281 and E283 together coordinate NADPH.

This sequence belongs to the NAD-dependent glycerol-3-phosphate dehydrogenase family.

The protein localises to the cytoplasm. The catalysed reaction is sn-glycerol 3-phosphate + NAD(+) = dihydroxyacetone phosphate + NADH + H(+). It catalyses the reaction sn-glycerol 3-phosphate + NADP(+) = dihydroxyacetone phosphate + NADPH + H(+). It functions in the pathway membrane lipid metabolism; glycerophospholipid metabolism. Catalyzes the reduction of the glycolytic intermediate dihydroxyacetone phosphate (DHAP) to sn-glycerol 3-phosphate (G3P), the key precursor for phospholipid synthesis. The polypeptide is Glycerol-3-phosphate dehydrogenase [NAD(P)+] (Geobacter metallireducens (strain ATCC 53774 / DSM 7210 / GS-15)).